The following is a 262-amino-acid chain: Ferric siderophore reductase (262 aa).

The [2Fe-2S] cluster site is built by cysteine 244, cysteine 245, cysteine 256, and cysteine 259.

Monomer. Requires [2Fe-2S] cluster as cofactor.

It is found in the cytoplasm. The protein resides in the cell inner membrane. Its activity is regulated as follows. Displays pH dependent redox properties. SufD is necessary for the stability of FhuF. Functionally, siderophore-iron reductase which is involved in iron removal from the hydroxamate-type siderophores coprogen, ferrichrome and ferrioxamine B after their transport into the cell. Binds both the iron-loaded and the apo forms of ferrichrome. The protein is Ferric siderophore reductase (fhuF) of Escherichia coli (strain K12).